The sequence spans 1431 residues: Trophinin (1431 aa).

Disordered stretches follow at residues 1 to 24 (MDRR…PGSL), 341 to 365 (SRAR…QGAQ), and 401 to 433 (PTTR…PWGR). Residues 405-415 (TRGKRNRKSKH) show a composition bias toward basic residues. An MAGE domain is found at 444 to 642 (LQERANKLVK…KDWAVQYREA (199 aa)). 2 tandem repeats follow at residues 751-760 (FSGGPGITFG) and 769-778 (FSNTASISFG). The segment at 751 to 1430 (FSGGPGITFG…ASLGACGFSY (680 aa)) is 62 X 10 AA approximate tandem repeats. Residues 779 to 786 (GTLSTSSS) form a 3; approximate repeat. A run of 2 repeats spans residues 787-796 (FSSAASISFG) and 805-814 (FSSEASISFG). A 6; approximate repeat occupies 823-833 (FSGGVSSSFSG). The stretch at 841-850 (FSGGASSGFG) is repeat 7. Residues 859–870 (FSGVLSTSTSFG) form an 8; approximate repeat. The stretch at 879 to 890 (FSSALSTSTGFG) is one 9; approximate repeat. A run of 5 repeats spans residues 901–910 (GSPSSSGSFG), 911–920 (GTLSTSICFG), 921–930 (GSPCTSTGFG), 931–940 (GTLSTSVSFG), and 941–950 (GSSSTSANFG). Residues 951-960 (GTLSTSICFD) form a 15; approximate repeat. 6 tandem repeats follow at residues 961 to 970 (GSPSTGAGFG), 971 to 980 (GALNTSASFG), 981 to 990 (SVLNTSTGFG), 991 to 1000 (GAMSTSADFG), 1001 to 1010 (GTLSTSVCFG), and 1011 to 1020 (GSPGTSVSFG). Residues 1021-1030 (SALNTNAGYG) form a 22; approximate repeat. 4 consecutive repeat copies span residues 1031–1040 (GAVSTNTDFG), 1041–1050 (GTLSTSVCFG), 1051–1060 (GSPSTSAGFG), and 1061–1070 (GALNTNASFG). Residues 1071–1080 (CAVSTSASFS) form a 27; approximate repeat. Residues 1081-1090 (GAVSTSACFS) form a 28; approximate repeat. A run of 8 repeats spans residues 1091-1100 (GAPITNPGFG), 1101-1110 (GAFSTSAGFG), 1111-1120 (GALSTAADFG), 1121-1130 (GTPSNSIGFG), 1131-1140 (AAPSTSVSFG), 1141-1150 (GAHGTSLCFG), 1151-1160 (GAPSTSLCFG), and 1161-1170 (SASNTNLCFG). A 37; approximate repeat occupies 1171-1180 (GPPSTSACFS). Residues 1181–1190 (GATSPSFCDG) form a 38; approximate repeat. 3 repeat units span residues 1191-1200 (PSTSTGFSFG), 1201-1210 (NGLSTNAGFG), and 1211-1220 (GGLNTSAGFG). A 42; approximate repeat occupies 1221–1230 (GGLGTSAGFS). The 43; approximate repeat unit spans residues 1231–1240 (GGLSTSSGFD). 2 tandem repeats follow at residues 1241-1250 (GGLGTSAGFG) and 1251-1260 (GGPGTSTGFG). The 46; approximate repeat unit spans residues 1261–1270 (GGLGTSAGFS). 3 consecutive repeat copies span residues 1271-1280 (GGLGTSAGFG), 1281-1290 (GGLVTSDGFG), and 1291-1300 (GGLGTNASFG). The stretch at 1301 to 1310 (STLGTSAGFS) is one 50; approximate repeat. Repeat unit 51 spans residues 1311 to 1320 (GGLSTSDGFG). Residues 1321–1330 (SRPNASFDRG) form a 52; approximate repeat. Residues 1331-1340 (LSTIIGFGSG) form a 53; approximate repeat. One copy of the 54; approximate repeat lies at 1341 to 1350 (SNTSTGFTGE). Residues 1342 to 1363 (NTSTGFTGEPSTSTGFSSGPSS) show a composition bias toward low complexity. The disordered stretch occupies residues 1342–1365 (NTSTGFTGEPSTSTGFSSGPSSIV). The 55; approximate repeat unit spans residues 1351–1360 (PSTSTGFSSG). A 56; approximate repeat occupies 1361 to 1370 (PSSIVGFSGG). A 57; approximate repeat occupies 1371-1380 (PSTGVGFCSG). Residues 1381-1390 (PSTSGFSGGP) form a 58; approximate repeat. The 59; approximate repeat unit spans residues 1391 to 1400 (STGAGFGGGP). A 60; approximate repeat occupies 1401–1410 (NTGAGFGGGP). Residues 1411–1420 (STSAGFGSGA) form a 61; approximate repeat. The stretch at 1421 to 1430 (ASLGACGFSY) is one 62; approximate repeat.

As to quaternary structure, directly binds bystin, and indirectly tastin. Strong expression at implantation sites. Found in the placenta from the sixth week of pregnancy. Was localized in the cytoplasm of the syncytiotrophoblast in the chorionic villi and in endometrial decidual cells at the uteroplacental interface. After week 10, the level decreased and then disappeared from placental villi. Also found in macrophages.

Its function is as follows. Could be involved with bystin and tastin in a cell adhesion molecule complex that mediates an initial attachment of the blastocyst to uterine epithelial cells at the time of the embryo implantation. Directly responsible for homophilic cell adhesion. This is Trophinin (TRO) from Homo sapiens (Human).